Reading from the N-terminus, the 144-residue chain is Transcription antitermination protein NusB (144 aa).

The protein belongs to the NusB family.

In terms of biological role, involved in transcription antitermination. Required for transcription of ribosomal RNA (rRNA) genes. Binds specifically to the boxA antiterminator sequence of the ribosomal RNA (rrn) operons. The polypeptide is Transcription antitermination protein NusB (Pasteurella multocida (strain Pm70)).